Reading from the N-terminus, the 83-residue chain is Cytochrome b559 subunit alpha (83 aa).

The helical transmembrane segment at 21–35 (VIHSITIPSLFIAGW) threads the bilayer. Heme is bound at residue histidine 23.

The protein belongs to the PsbE/PsbF family. As to quaternary structure, heterodimer of an alpha subunit and a beta subunit. PSII is composed of 1 copy each of membrane proteins PsbA, PsbB, PsbC, PsbD, PsbE, PsbF, PsbH, PsbI, PsbJ, PsbK, PsbL, PsbM, PsbT, PsbX, PsbY, PsbZ, Psb30/Ycf12, at least 3 peripheral proteins of the oxygen-evolving complex and a large number of cofactors. It forms dimeric complexes. Heme b serves as cofactor.

It localises to the plastid. It is found in the chloroplast thylakoid membrane. This b-type cytochrome is tightly associated with the reaction center of photosystem II (PSII). PSII is a light-driven water:plastoquinone oxidoreductase that uses light energy to abstract electrons from H(2)O, generating O(2) and a proton gradient subsequently used for ATP formation. It consists of a core antenna complex that captures photons, and an electron transfer chain that converts photonic excitation into a charge separation. This chain is Cytochrome b559 subunit alpha, found in Huperzia lucidula (Shining clubmoss).